Here is a 381-residue protein sequence, read N- to C-terminus: Short-chain dehydrogenase anuD (381 aa).

Residues Ile-84, Lys-109, Asp-133, Asn-158, Tyr-244, and Lys-248 each contribute to the NADP(+) site. The active-site Proton acceptor is the Tyr-244. Residue Tyr-244 is the Proton donor of the active site. The active-site Lowers pKa of active site Tyr is Lys-248.

The protein belongs to the short-chain dehydrogenases/reductases (SDR) family.

In terms of biological role, highly reducing polyketide synthase; part of the gene cluster that mediates the biosynthesis of annullatin D, an alkylated aromatic polyketide with a fused dihydrobenzofuran lactone ring system that exhibits potent agonistic activities toward the cannabinoid receptors. AnuD does not seem to play a role within the pathway. The annullatin backbone 2-hydroxymethyl-3-pentylphenol is assembled from one acetyl-CoA starter unit and 5 malonyl-CoA elongation units by cooperation of the highly reducing polyketide synthase anuA, the short-chain dehydrogenase anuB and the oxidoreductase anuC, before being hydroxylated at the C-5 alkyl chain by the cytochrome P450 monooxygenase anuE to form (8S)-annullatin E. The prenyltransferase anuH subsequently installs one isoprenyl group at the benzene ring to form (8S)-annullatin J. Enzymatic or nonenzymatic dihydro-benzofuran ring formation between the prenyl and the phenolic hydroxyl groups in (8S)-annullatin J results in two diastereomers (2S,9S)-annullatin H and compound 12. The intermediate (2S,9S)-annullatin H is then converted to (2S,9S)-annullatin D by the FAD-linked oxidoreductase anuG-catalyzed five-member lactone ring formation. The isomer 12 acts as a substrate for the short-chain dehydrogenase anuF and is oxidized to (2R)-annullatin F, which is subsequently acetylated by an acetyltransferase leading to (2R)-annullatin G formation. The remaining enzymes identified within the cluster, anuD, anuI and anuJ, seem not to be involved in annullatin biosynthesis. This Penicillium roqueforti (strain FM164) protein is Short-chain dehydrogenase anuD.